A 375-amino-acid polypeptide reads, in one-letter code: DNA replication and repair protein RecF (375 aa).

30 to 37 (GKNAQGKT) lines the ATP pocket.

This sequence belongs to the RecF family.

It is found in the cytoplasm. Its function is as follows. The RecF protein is involved in DNA metabolism; it is required for DNA replication and normal SOS inducibility. RecF binds preferentially to single-stranded, linear DNA. It also seems to bind ATP. The sequence is that of DNA replication and repair protein RecF from Lactobacillus acidophilus (strain ATCC 700396 / NCK56 / N2 / NCFM).